A 152-amino-acid chain; its full sequence is MSEKYVVTWDMLQIHARKLASRLMPSEQWKGIIAVSRGGLVPGALLARELGIRHVDTVCISSYDHDNQRELKVLKRAEGDGEGFIVIDDLVDTGGTAVAIREMYPKAHFVTIFAKPAGRPLVDDYVIDIPQNTWIEQPWDMGVVFVPPISGR.

Residues 37 to 38, Arg-69, and 88 to 96 each bind 5-phospho-alpha-D-ribose 1-diphosphate; these read RG and DDLVDTGGT. Arg-69 contacts GMP. Asp-89 is a Mg(2+) binding site. The guanine site is built by Asp-92 and Ile-135. Xanthine contacts are provided by Asp-92 and Ile-135. GMP is bound by residues 92–96 and 134–135; these read DTGGT and WI.

This sequence belongs to the purine/pyrimidine phosphoribosyltransferase family. XGPT subfamily. As to quaternary structure, homotetramer. It depends on Mg(2+) as a cofactor.

The protein resides in the cell inner membrane. It catalyses the reaction GMP + diphosphate = guanine + 5-phospho-alpha-D-ribose 1-diphosphate. The catalysed reaction is XMP + diphosphate = xanthine + 5-phospho-alpha-D-ribose 1-diphosphate. The enzyme catalyses IMP + diphosphate = hypoxanthine + 5-phospho-alpha-D-ribose 1-diphosphate. It participates in purine metabolism; GMP biosynthesis via salvage pathway; GMP from guanine: step 1/1. The protein operates within purine metabolism; XMP biosynthesis via salvage pathway; XMP from xanthine: step 1/1. In terms of biological role, purine salvage pathway enzyme that catalyzes the transfer of the ribosyl-5-phosphate group from 5-phospho-alpha-D-ribose 1-diphosphate (PRPP) to the N9 position of the 6-oxopurines guanine and xanthine to form the corresponding ribonucleotides GMP (guanosine 5'-monophosphate) and XMP (xanthosine 5'-monophosphate), with the release of PPi. To a lesser extent, also acts on hypoxanthine. The chain is Xanthine-guanine phosphoribosyltransferase from Salmonella choleraesuis (strain SC-B67).